Consider the following 129-residue polypeptide: 3-aminoacrylate deaminase RutC (129 aa).

The protein belongs to the RutC family.

The enzyme catalyses (Z)-3-aminoacrylate + H2O + H(+) = 3-oxopropanoate + NH4(+). Functionally, involved in pyrimidine catabolism. Catalyzes the deamination of 3-aminoacrylate to malonic semialdehyde, a reaction that can also occur spontaneously. RutC may facilitate the reaction and modulate the metabolic fitness, rather than catalyzing essential functions. The chain is 3-aminoacrylate deaminase RutC from Rhizobium rhizogenes (strain K84 / ATCC BAA-868) (Agrobacterium radiobacter).